Consider the following 124-residue polypeptide: Fluoride-specific ion channel FluC (124 aa).

A run of 4 helical transmembrane segments spans residues 5-25 (LLVS…AVWF), 32-52 (FAFG…ITLG), 61-81 (LLFV…SAEV), and 94-114 (LAVI…GILV). Na(+)-binding residues include Gly-69 and Thr-72.

It belongs to the fluoride channel Fluc/FEX (TC 1.A.43) family.

The protein localises to the cell inner membrane. The catalysed reaction is fluoride(in) = fluoride(out). With respect to regulation, na(+) is not transported, but it plays an essential structural role and its presence is essential for fluoride channel function. In terms of biological role, fluoride-specific ion channel. Important for reducing fluoride concentration in the cell, thus reducing its toxicity. The chain is Fluoride-specific ion channel FluC from Haemophilus ducreyi (strain 35000HP / ATCC 700724).